Here is a 441-residue protein sequence, read N- to C-terminus: tRNA modification GTPase MnmE (441 aa).

(6S)-5-formyl-5,6,7,8-tetrahydrofolate contacts are provided by arginine 22, glutamate 80, and lysine 118. Positions 213-366 (GIYIAIVGEP…LLNLIKQRVE (154 aa)) constitute a TrmE-type G domain. GTP-binding positions include 223 to 228 (NSGKST), 242 to 248 (SEYAGTT), and 267 to 270 (DTAG). Mg(2+)-binding residues include serine 227 and threonine 248. Lysine 441 provides a ligand contact to (6S)-5-formyl-5,6,7,8-tetrahydrofolate.

Belongs to the TRAFAC class TrmE-Era-EngA-EngB-Septin-like GTPase superfamily. TrmE GTPase family. In terms of assembly, homodimer. Heterotetramer of two MnmE and two MnmG subunits. It depends on K(+) as a cofactor.

The protein resides in the cytoplasm. Functionally, exhibits a very high intrinsic GTPase hydrolysis rate. Involved in the addition of a carboxymethylaminomethyl (cmnm) group at the wobble position (U34) of certain tRNAs, forming tRNA-cmnm(5)s(2)U34. The sequence is that of tRNA modification GTPase MnmE from Ehrlichia canis (strain Jake).